A 132-amino-acid polypeptide reads, in one-letter code: MHLRLTLVALGAAYVCANAVESTMNRLVAETLTLLSTHQTLLIGDGNLMIPTPQHTNHQLCIEEVFQGIDTLKNQTAQGDAVKKIFRNLSLIKEYIDLQKRKCGGERWRVKQFLDYLQVFLGVINTEWTMES.

A signal peptide spans 1–19 (MHLRLTLVALGAAYVCANA). N74 and N88 each carry an N-linked (GlcNAc...) asparagine glycan.

This sequence belongs to the IL-5 family. In terms of assembly, homodimer; disulfide-linked. Interacts with IL5RA. Interacts with CSF2RB.

Its subcellular location is the secreted. Its function is as follows. Homodimeric cytokine expressed predominantly by T-lymphocytes and NK cells that plays an important role in the survival, differentiation, and chemotaxis of eosinophils. Also acts on activated and resting B-cells to induce immunoglobulin production, growth, and differentiation. Mechanistically, exerts its biological effects through a receptor composed of IL5RA subunit and the cytokine receptor common subunit beta/CSF2RB. Binding to the receptor leads to activation of various kinases including LYN, SYK and JAK2 and thereby propagates signals through the RAS-MAPK and JAK-STAT5 pathways respectively. The protein is Interleukin-5 (IL5) of Ovis aries (Sheep).